The sequence spans 142 residues: VapC ribonuclease R02377 (142 aa).

One can recognise a PINc domain in the interval 3–140 (FVDGSVIVAI…YKGNDFSQTD (138 aa)). Mg(2+) contacts are provided by Asp5 and Asp115.

Belongs to the PINc/VapC protein family. Mg(2+) is required as a cofactor.

Its function is as follows. Toxic component of a type II toxin-antitoxin (TA) system. An RNase. The chain is VapC ribonuclease R02377 from Rhizobium meliloti (strain 1021) (Ensifer meliloti).